A 638-amino-acid chain; its full sequence is Adhesion G-protein coupled receptor F2 (638 aa).

The signal sequence occupies residues 1-25 (MISARWLYCLVLLLATESCRLFCQA). The Extracellular portion of the chain corresponds to 26-386 (ASKSKENVMP…ESPVLTYITY (361 aa)). 5 N-linked (GlcNAc...) asparagine glycosylation sites follow: Asn155, Asn219, Asn248, Asn293, and Asn311. One can recognise a GAIN-B domain in the interval 233–377 (PRNSLGKNFT…SILMSPNTVE (145 aa)). Cystine bridges form between Cys329-Cys356 and Cys344-Cys358. The interval 329-377 (CVGWHSLESRWDRRACKMIQENSRQAICRCQPNKFFTSFSILMSPNTVE) is GPS. The helical transmembrane segment at 387–407 (IGLGISICSLIICLAIEALVW) threads the bilayer. Residues 408 to 422 (SQVTKTEISYLRHLC) are Cytoplasmic-facing. The helical transmembrane segment at 423-443 (IANIAVTLLMADVWFIVASFL) threads the bilayer. Topologically, residues 444 to 465 (SGPIVHHNGCVTATFFVHFFYL) are extracellular. Residues 466–486 (SVFFWMLAKALLILYGILIVF) form a helical membrane-spanning segment. Topologically, residues 487-493 (HTLPKSC) are cytoplasmic. Residues 494 to 514 (LVASLFTVGYGCPLVIAVITL) form a helical membrane-spanning segment. The Extracellular segment spans residues 515 to 541 (AVTEPGKGYLRPEACWLNWDMTKALLA). Residues 542 to 562 (FVVPALAIVVVNLITVTLVII) traverse the membrane as a helical segment. The Cytoplasmic segment spans residues 563–586 (KTQRAAVGSSMFQEVRAIVRICKN). The helical transmembrane segment at 587 to 607 (IAILTPLLGLTWGFGIATVVA) threads the bilayer. The Extracellular portion of the chain corresponds to 608–610 (GHS). A helical membrane pass occupies residues 611-631 (LAFHIIFSLLNALQVSPDAMI). Residues 632–638 (ESEWRGC) are Cytoplasmic-facing.

This sequence belongs to the G-protein coupled receptor 2 family. Adhesion G-protein coupled receptor (ADGR) subfamily.

Its subcellular location is the membrane. Functionally, orphan receptor. This is Adhesion G-protein coupled receptor F2 (Adgrf2) from Rattus norvegicus (Rat).